The sequence spans 322 residues: tRNA dimethylallyltransferase (322 aa).

21–28 (GQTAVGKT) provides a ligand contact to ATP. 23 to 28 (TAVGKT) contributes to the substrate binding site. Positions 46–49 (DSGC) are interaction with substrate tRNA.

Belongs to the IPP transferase family. Monomer. The cofactor is Mg(2+).

The enzyme catalyses adenosine(37) in tRNA + dimethylallyl diphosphate = N(6)-dimethylallyladenosine(37) in tRNA + diphosphate. In terms of biological role, catalyzes the transfer of a dimethylallyl group onto the adenine at position 37 in tRNAs that read codons beginning with uridine, leading to the formation of N6-(dimethylallyl)adenosine (i(6)A). The protein is tRNA dimethylallyltransferase of Wigglesworthia glossinidia brevipalpis.